We begin with the raw amino-acid sequence, 147 residues long: Large ribosomal subunit protein uL15 (147 aa).

Residues 1-65 are disordered; sequence MQLHELKPAP…PLQRRLPKRG (65 aa). Composition is skewed to gly residues over residues 21-31 and 42-52; these read QGIGSGLGKTA and SGGGVRPGFEG.

Belongs to the universal ribosomal protein uL15 family. In terms of assembly, part of the 50S ribosomal subunit.

Binds to the 23S rRNA. The chain is Large ribosomal subunit protein uL15 from Heliobacterium modesticaldum (strain ATCC 51547 / Ice1).